The sequence spans 59 residues: UPF0509 protein KPN78578_12530 (59 aa).

Belongs to the UPF0509 family.

The chain is UPF0509 protein KPN78578_12530 from Klebsiella pneumoniae subsp. pneumoniae (strain ATCC 700721 / MGH 78578).